Here is a 316-residue protein sequence, read N- to C-terminus: PAK4-inhibitor inka1 (316 aa).

Residues 108-130 form a disordered region; sequence YSEVSGSSLRGEEDDIVEEESET. Residues 119–128 show a composition bias toward acidic residues; it reads EEDDIVEEES. 2 inka box regions span residues 182–219 and 289–316; these read DSQD…DLPE and SDIA…AGFL.

Belongs to the INKA family. As to quaternary structure, interacts with pak4/pak5.

The protein resides in the nucleus. It is found in the cytoplasm. Functionally, inhibitor of the serine/threonine-protein kinase pak4/pak5. Acts by binding pak4/pak5 in a substrate-like manner, inhibiting the protein kinase activity. Required for the proper migration of neural crest cells during embryonic development, probably by inhibiting pak4/pak5. This is PAK4-inhibitor inka1 from Xenopus laevis (African clawed frog).